A 1228-amino-acid polypeptide reads, in one-letter code: DNA-directed RNA polymerase subunit beta'' (1228 aa).

Zn(2+) contacts are provided by C222, C296, C303, and C306.

It belongs to the RNA polymerase beta' chain family. RpoC2 subfamily. In plastids the minimal PEP RNA polymerase catalytic core is composed of four subunits: alpha, beta, beta', and beta''. When a (nuclear-encoded) sigma factor is associated with the core the holoenzyme is formed, which can initiate transcription. Zn(2+) serves as cofactor.

The protein localises to the plastid. The protein resides in the chloroplast. The enzyme catalyses RNA(n) + a ribonucleoside 5'-triphosphate = RNA(n+1) + diphosphate. Functionally, DNA-dependent RNA polymerase catalyzes the transcription of DNA into RNA using the four ribonucleoside triphosphates as substrates. This Gracilaria tenuistipitata var. liui (Red alga) protein is DNA-directed RNA polymerase subunit beta''.